Reading from the N-terminus, the 335-residue chain is Nucleoid-associated protein SeAg_B2375 (335 aa).

This sequence belongs to the YejK family.

It localises to the cytoplasm. The protein localises to the nucleoid. The polypeptide is Nucleoid-associated protein SeAg_B2375 (Salmonella agona (strain SL483)).